The chain runs to 155 residues: Protein-export protein SecB (155 aa).

Belongs to the SecB family. In terms of assembly, homotetramer, a dimer of dimers. One homotetramer interacts with 1 SecA dimer.

The protein resides in the cytoplasm. Its function is as follows. One of the proteins required for the normal export of preproteins out of the cell cytoplasm. It is a molecular chaperone that binds to a subset of precursor proteins, maintaining them in a translocation-competent state. It also specifically binds to its receptor SecA. In Albidiferax ferrireducens (strain ATCC BAA-621 / DSM 15236 / T118) (Rhodoferax ferrireducens), this protein is Protein-export protein SecB.